Reading from the N-terminus, the 375-residue chain is Succinyl-diaminopimelate desuccinylase (375 aa).

Residue His-66 coordinates Zn(2+). Asp-68 is a catalytic residue. Asp-99 is a Zn(2+) binding site. Residue Glu-133 is the Proton acceptor of the active site. Positions 134, 162, and 348 each coordinate Zn(2+).

Belongs to the peptidase M20A family. DapE subfamily. As to quaternary structure, homodimer. Requires Zn(2+) as cofactor. Co(2+) serves as cofactor.

It catalyses the reaction N-succinyl-(2S,6S)-2,6-diaminopimelate + H2O = (2S,6S)-2,6-diaminopimelate + succinate. It participates in amino-acid biosynthesis; L-lysine biosynthesis via DAP pathway; LL-2,6-diaminopimelate from (S)-tetrahydrodipicolinate (succinylase route): step 3/3. Its function is as follows. Catalyzes the hydrolysis of N-succinyl-L,L-diaminopimelic acid (SDAP), forming succinate and LL-2,6-diaminopimelate (DAP), an intermediate involved in the bacterial biosynthesis of lysine and meso-diaminopimelic acid, an essential component of bacterial cell walls. This Janthinobacterium sp. (strain Marseille) (Minibacterium massiliensis) protein is Succinyl-diaminopimelate desuccinylase.